We begin with the raw amino-acid sequence, 179 residues long: Large ribosomal subunit protein uL6 (179 aa).

It belongs to the universal ribosomal protein uL6 family. Part of the 50S ribosomal subunit.

Functionally, this protein binds to the 23S rRNA, and is important in its secondary structure. It is located near the subunit interface in the base of the L7/L12 stalk, and near the tRNA binding site of the peptidyltransferase center. The protein is Large ribosomal subunit protein uL6 of Akkermansia muciniphila (strain ATCC BAA-835 / DSM 22959 / JCM 33894 / BCRC 81048 / CCUG 64013 / CIP 107961 / Muc).